We begin with the raw amino-acid sequence, 200 residues long: Holliday junction branch migration complex subunit RuvA (200 aa).

Residues 1–63 (MIASVRGEVL…EDSMTLYGFP (63 aa)) form a domain I region. The segment at 64–142 (DSESKELFGL…AVGSTSGAVP (79 aa)) is domain II. The segment at 142–146 (PLGAG) is flexible linker. The domain III stretch occupies residues 147 to 200 (GGGSVRDQIVEALVGLGFPAKQAEQATDSVLAEAPESTTSSALRSALSLLGKTR).

It belongs to the RuvA family. Homotetramer. Forms an RuvA(8)-RuvB(12)-Holliday junction (HJ) complex. HJ DNA is sandwiched between 2 RuvA tetramers; dsDNA enters through RuvA and exits via RuvB. An RuvB hexamer assembles on each DNA strand where it exits the tetramer. Each RuvB hexamer is contacted by two RuvA subunits (via domain III) on 2 adjacent RuvB subunits; this complex drives branch migration. In the full resolvosome a probable DNA-RuvA(4)-RuvB(12)-RuvC(2) complex forms which resolves the HJ.

Its subcellular location is the cytoplasm. Its function is as follows. The RuvA-RuvB-RuvC complex processes Holliday junction (HJ) DNA during genetic recombination and DNA repair, while the RuvA-RuvB complex plays an important role in the rescue of blocked DNA replication forks via replication fork reversal (RFR). RuvA specifically binds to HJ cruciform DNA, conferring on it an open structure. The RuvB hexamer acts as an ATP-dependent pump, pulling dsDNA into and through the RuvAB complex. HJ branch migration allows RuvC to scan DNA until it finds its consensus sequence, where it cleaves and resolves the cruciform DNA. This chain is Holliday junction branch migration complex subunit RuvA, found in Rhodococcus opacus (strain B4).